We begin with the raw amino-acid sequence, 343 residues long: Protein RecA (343 aa).

G64–T71 provides a ligand contact to ATP.

The protein belongs to the RecA family.

Its subcellular location is the cytoplasm. Can catalyze the hydrolysis of ATP in the presence of single-stranded DNA, the ATP-dependent uptake of single-stranded DNA by duplex DNA, and the ATP-dependent hybridization of homologous single-stranded DNAs. It interacts with LexA causing its activation and leading to its autocatalytic cleavage. In Acidiphilium cryptum (strain JF-5), this protein is Protein RecA.